The primary structure comprises 122 residues: Large ribosomal subunit protein uL14c (122 aa).

It belongs to the universal ribosomal protein uL14 family. As to quaternary structure, part of the 50S ribosomal subunit.

Its subcellular location is the plastid. It is found in the chloroplast. Its function is as follows. Binds to 23S rRNA. The sequence is that of Large ribosomal subunit protein uL14c from Coffea arabica (Arabian coffee).